A 464-amino-acid polypeptide reads, in one-letter code: Chromosomal replication initiator protein DnaA (464 aa).

Positions 1 to 82 (MSLSLWQQCL…LLRFEVGSKP (82 aa)) are domain I, interacts with DnaA modulators. The tract at residues 82–127 (PPQMAVLQPASQHASEAPSQAAVARPRPSRPSWDNAPVQPELSYRS) is domain II. The segment at 91–118 (ASQHASEAPSQAAVARPRPSRPSWDNAP) is disordered. The segment at 128 to 344 (NVNPKHNFDN…GALNRVIANA (217 aa)) is domain III, AAA+ region. ATP contacts are provided by G172, G174, K175, and T176. Positions 345 to 464 (NFTGRAITID…FSNLIRTLSS (120 aa)) are domain IV, binds dsDNA.

Belongs to the DnaA family. As to quaternary structure, oligomerizes as a right-handed, spiral filament on DNA at oriC.

It localises to the cytoplasm. In terms of biological role, plays an essential role in the initiation and regulation of chromosomal replication. ATP-DnaA binds to the origin of replication (oriC) to initiate formation of the DNA replication initiation complex once per cell cycle. Binds the DnaA box (a 9 base pair repeat at the origin) and separates the double-stranded (ds)DNA. Forms a right-handed helical filament on oriC DNA; dsDNA binds to the exterior of the filament while single-stranded (ss)DNA is stabiized in the filament's interior. The ATP-DnaA-oriC complex binds and stabilizes one strand of the AT-rich DNA unwinding element (DUE), permitting loading of DNA polymerase. After initiation quickly degrades to an ADP-DnaA complex that is not apt for DNA replication. Binds acidic phospholipids. This Sodalis glossinidius (strain morsitans) protein is Chromosomal replication initiator protein DnaA.